A 671-amino-acid chain; its full sequence is DNA ligase (671 aa).

NAD(+)-binding positions include aspartate 32–aspartate 36, serine 81–leucine 82, and glutamate 113. Residue lysine 115 is the N6-AMP-lysine intermediate of the active site. The NAD(+) site is built by arginine 136, glutamate 173, lysine 290, and lysine 314. Zn(2+) contacts are provided by cysteine 408, cysteine 411, cysteine 426, and cysteine 432. The BRCT domain maps to glutamate 593 to serine 671.

The protein belongs to the NAD-dependent DNA ligase family. LigA subfamily. The cofactor is Mg(2+). Mn(2+) is required as a cofactor.

It carries out the reaction NAD(+) + (deoxyribonucleotide)n-3'-hydroxyl + 5'-phospho-(deoxyribonucleotide)m = (deoxyribonucleotide)n+m + AMP + beta-nicotinamide D-nucleotide.. Its function is as follows. DNA ligase that catalyzes the formation of phosphodiester linkages between 5'-phosphoryl and 3'-hydroxyl groups in double-stranded DNA using NAD as a coenzyme and as the energy source for the reaction. It is essential for DNA replication and repair of damaged DNA. The polypeptide is DNA ligase (Shigella sonnei (strain Ss046)).